The sequence spans 345 residues: uncharacterized protein (345 aa).

Solcar repeat units follow at residues 80 to 153 (MSFF…MKSR), 162 to 246 (SDPQ…LKLK), and 256 to 339 (NLAH…ILNF). 6 consecutive transmembrane segments (helical) span residues 83–103 (FEALGAGICAGLAVDLSLFPI), 128–148 (GLGSILVGSAPGASLFFTTYE), 220–240 (AGYGITIAREIPFTLIQFPIW), 262–282 (AISGSIAGGIAAALTTPFDVV), 296–316 (VFTIKSIVAHEGFLALYKGIV), and 319–339 (VLWLSGGGAIFLGCYDVILNF).

The protein belongs to the mitochondrial carrier (TC 2.A.29) family.

The protein resides in the mitochondrion inner membrane. This is an uncharacterized protein from Schizosaccharomyces pombe (strain 972 / ATCC 24843) (Fission yeast).